A 73-amino-acid polypeptide reads, in one-letter code: Translation initiation factor IF-1 (73 aa).

In terms of domain architecture, S1-like spans 1 to 72 (MAKDEIIEFE…SKGRITYRGK (72 aa)).

This sequence belongs to the IF-1 family. As to quaternary structure, component of the 30S ribosomal translation pre-initiation complex which assembles on the 30S ribosome in the order IF-2 and IF-3, IF-1 and N-formylmethionyl-tRNA(fMet); mRNA recruitment can occur at any time during PIC assembly.

Its subcellular location is the cytoplasm. Functionally, one of the essential components for the initiation of protein synthesis. Stabilizes the binding of IF-2 and IF-3 on the 30S subunit to which N-formylmethionyl-tRNA(fMet) subsequently binds. Helps modulate mRNA selection, yielding the 30S pre-initiation complex (PIC). Upon addition of the 50S ribosomal subunit IF-1, IF-2 and IF-3 are released leaving the mature 70S translation initiation complex. This chain is Translation initiation factor IF-1, found in Psychrobacter arcticus (strain DSM 17307 / VKM B-2377 / 273-4).